A 135-amino-acid polypeptide reads, in one-letter code: MSDLTSPKVNKSDADWREQLTPEQYHILREHGTERPFTGPYWNSTEKGLYRCAACDEPLFLSDTKFDAGCGWPSYFEPVKPGAVTEHRDSTHGMVRTEIRCANCGGHLGHVFPDGPPPTGLRYCINGHSMVFEPV.

The region spanning 13 to 135 (DADWREQLTP…NGHSMVFEPV (123 aa)) is the MsrB domain. Zn(2+) contacts are provided by Cys52, Cys55, Cys101, and Cys104. The active-site Nucleophile is Cys124.

The protein belongs to the MsrB Met sulfoxide reductase family. The cofactor is Zn(2+).

It catalyses the reaction L-methionyl-[protein] + [thioredoxin]-disulfide + H2O = L-methionyl-(R)-S-oxide-[protein] + [thioredoxin]-dithiol. The chain is Peptide methionine sulfoxide reductase MsrB from Agrobacterium fabrum (strain C58 / ATCC 33970) (Agrobacterium tumefaciens (strain C58)).